Consider the following 573-residue polypeptide: Heat shock protein 60A (573 aa).

The N-terminal 57 residues, 1–57 (MFRLPVSLARSSISRQLAMRGYAKDVRFGPEVRAMMLQGVDVLADAVAVTMGPKGRN), are a transit peptide targeting the mitochondrion.

Belongs to the chaperonin (HSP60) family.

The protein localises to the mitochondrion matrix. Prevents misfolding and promotes the refolding and proper assembly of unfolded polypeptides generated under stress conditions. The protein is Heat shock protein 60A of Drosophila melanogaster (Fruit fly).